Reading from the N-terminus, the 148-residue chain is UPF0735 ACT domain-containing protein Dred_1164 (148 aa).

The ACT domain maps to 72–147 (TLALLMEHQP…GVREVRLVGQ (76 aa)).

The protein belongs to the UPF0735 family.

This is UPF0735 ACT domain-containing protein Dred_1164 from Desulforamulus reducens (strain ATCC BAA-1160 / DSM 100696 / MI-1) (Desulfotomaculum reducens).